We begin with the raw amino-acid sequence, 135 residues long: Protein PsiE homolog (135 aa).

4 helical membrane-spanning segments follow: residues 20–40, 54–74, 82–102, and 107–127; these read VGLIMLAAILVVFLVKETIHL, YMLIEGIVIYFLYFEFIALIV, HFPLRYFIYIGITAIIRLIIV, and PIDTLIYSGSILVLVVTLYLA.

Belongs to the PsiE family.

The protein localises to the cell inner membrane. The protein is Protein PsiE homolog of Yersinia pestis (strain Pestoides F).